Here is a 322-residue protein sequence, read N- to C-terminus: Corticotropin-releasing factor-binding protein (322 aa).

Residues 1 to 24 (MSPNFKLQCHFILILLTALRGESR) form the signal peptide. 5 disulfide bridges follow: Cys60/Cys81, Cys104/Cys141, Cys183/Cys205, Cys237/Cys264, and Cys277/Cys318. An N-linked (GlcNAc...) asparagine glycan is attached at Asn204.

This sequence belongs to the CRF-binding protein family.

The protein resides in the secreted. Its function is as follows. Binds CRF and inactivates it. May prevent inappropriate pituitary-adrenal stimulation in pregnancy. In Mus musculus (Mouse), this protein is Corticotropin-releasing factor-binding protein (Crhbp).